The primary structure comprises 192 residues: MEQQTAYSLKQSIIFSHKFAQLSKALWKSVEKDWQTWIKPFNLNINEHHILWITYHLDGASISDIAKFGVMHVSTAFNFSKKLEERGLLTFSKREHDKRNTYVDLTEQGRELFLETLEAYKPSTYSVYGGALPIKDLYGKFPEFSELLSIVRHVYGPDFIDMFETALTRLEDGFIEEDGKLKAVDSETKSTV.

In terms of domain architecture, HTH marR-type spans 12-156 (SIIFSHKFAQ…LLSIVRHVYG (145 aa)). Residues 62–85 (ISDIAKFGVMHVSTAFNFSKKLEE) constitute a DNA-binding region (H-T-H motif).

In terms of assembly, homodimer.

Functionally, negative regulator of protease production and sporulation. The chain is HTH-type transcriptional regulator Hpr from Halalkalibacterium halodurans (strain ATCC BAA-125 / DSM 18197 / FERM 7344 / JCM 9153 / C-125) (Bacillus halodurans).